The primary structure comprises 299 residues: Peroxisomal biogenesis factor 19 (299 aa).

Residues 1–63 (MAAAEEDYGV…SPGDTAKDSL (63 aa)) form a disordered region. A2 is subject to N-acetylalanine. The interval 2–56 (AAAEEDYGVGAEADRELEELLESALDDFDKAKPSPAPPSTTTAPDASGPQKRSPG) is docking to the peroxisome membrane and binding to PEX3. The interval 2–91 (AAAEEDYGVG…QATAEFEKAM (90 aa)) is necessary for PEX19 function on peroxisome biogenesis. Over residues 16 to 27 (RELEELLESALD) the composition is skewed to acidic residues. Residues S35, S54, and S66 each carry the phosphoserine modification. T236 bears the Phosphothreonine mark. C296 carries the post-translational modification Cysteine methyl ester. C296 carries the S-farnesyl cysteine lipid modification. The propeptide at 297–299 (LIM) is removed in mature form.

Belongs to the peroxin-19 family. As to quaternary structure, interacts with a broad range of peroxisomal membrane proteins, including PEX3, PEX10, PEX11A, PEX11B, PEX12, PEX13, PEX14 and PEX16, PXMP2/PMP22, PXMP4/PMP24, SLC25A17/PMP34, ABCD1/ALDP, ABCD2/ALDRP, and ABCD3/PMP70. Also interacts with the tumor suppressor CDKN2A/p19ARF.

It localises to the cytoplasm. The protein resides in the peroxisome membrane. Functionally, necessary for early peroxisomal biogenesis. Acts both as a cytosolic chaperone and as an import receptor for peroxisomal membrane proteins (PMPs). Binds and stabilizes newly synthesized PMPs in the cytoplasm by interacting with their hydrophobic membrane-spanning domains, and targets them to the peroxisome membrane by binding to the integral membrane protein PEX3. Excludes CDKN2A from the nucleus and prevents its interaction with MDM2, which results in active degradation of TP53. The protein is Peroxisomal biogenesis factor 19 (PEX19) of Pongo abelii (Sumatran orangutan).